The chain runs to 281 residues: NADPH-dependent 7-cyano-7-deazaguanine reductase (281 aa).

Substrate is bound at residue Val88 to Ser90. Ser90–Lys91 serves as a coordination point for NADPH. Cys189 acts as the Thioimide intermediate in catalysis. The active-site Proton donor is the Asp196. Substrate is bound at residue His228 to Glu229. Position 257–258 (Arg257–Gly258) interacts with NADPH.

This sequence belongs to the GTP cyclohydrolase I family. QueF type 2 subfamily. Homodimer.

The protein resides in the cytoplasm. The enzyme catalyses 7-aminomethyl-7-carbaguanine + 2 NADP(+) = 7-cyano-7-deazaguanine + 2 NADPH + 3 H(+). The protein operates within tRNA modification; tRNA-queuosine biosynthesis. In terms of biological role, catalyzes the NADPH-dependent reduction of 7-cyano-7-deazaguanine (preQ0) to 7-aminomethyl-7-deazaguanine (preQ1). This chain is NADPH-dependent 7-cyano-7-deazaguanine reductase, found in Klebsiella pneumoniae subsp. pneumoniae (strain ATCC 700721 / MGH 78578).